Consider the following 94-residue polypeptide: Large ribosomal subunit protein bL25 (94 aa).

The protein belongs to the bacterial ribosomal protein bL25 family. In terms of assembly, part of the 50S ribosomal subunit; part of the 5S rRNA/L5/L18/L25 subcomplex. Contacts the 5S rRNA. Binds to the 5S rRNA independently of L5 and L18.

This is one of the proteins that binds to the 5S RNA in the ribosome where it forms part of the central protuberance. This chain is Large ribosomal subunit protein bL25, found in Edwardsiella ictaluri (strain 93-146).